The following is an 89-amino-acid chain: Large ribosomal subunit protein bL27 (89 aa).

The protein belongs to the bacterial ribosomal protein bL27 family.

In Cereibacter sphaeroides (strain ATCC 17029 / ATH 2.4.9) (Rhodobacter sphaeroides), this protein is Large ribosomal subunit protein bL27.